Consider the following 495-residue polypeptide: Probable lysine-specific demethylase 4A (495 aa).

A JmjN domain is found at 18–60 (IMTFRPSYEEFQNFSAYIEYIESRGAHLAGLAKIQPPAEWVPR). 2-oxoglutarate is bound at residue tyrosine 139. The JmjC domain occupies 149 to 315 (DEDLDVWNIG…YGKRASICRC (167 aa)). Fe cation contacts are provided by histidine 195 and glutamate 197. Residues asparagine 205 and lysine 213 each coordinate 2-oxoglutarate. Residues cysteine 241 and histidine 247 each contribute to the Zn(2+) site. 2-oxoglutarate is bound at residue lysine 248. Histidine 283 is a Fe cation binding site. Zn(2+)-binding residues include cysteine 313 and cysteine 315. The residue at position 409 (serine 409) is a Phosphoserine.

It belongs to the JHDM3 histone demethylase family. The cofactor is Fe(2+).

The protein resides in the nucleus. The enzyme catalyses N(6),N(6),N(6)-trimethyl-L-lysyl(9)-[histone H3] + 2 2-oxoglutarate + 2 O2 = N(6)-methyl-L-lysyl(9)-[histone H3] + 2 formaldehyde + 2 succinate + 2 CO2. It carries out the reaction N(6),N(6),N(6)-trimethyl-L-lysyl(36)-[histone H3] + 2 2-oxoglutarate + 2 O2 = N(6)-methyl-L-lysyl(36)-[histone H3] + 2 formaldehyde + 2 succinate + 2 CO2. Probable histone demethylase that specifically demethylates 'Lys-9' and 'Lys-36' residues of histone H3, thereby playing a central role in histone code. Demethylation of Lys residue generates formaldehyde and succinate. The polypeptide is Probable lysine-specific demethylase 4A (Kdm4A) (Drosophila melanogaster (Fruit fly)).